The sequence spans 852 residues: Homeobox-leucine zipper protein ATHB-14 (852 aa).

Residues 1–25 form a disordered region; sequence MMMVHSMSRDMMNRESPDKGLDSGK. Over residues 7–22 the composition is skewed to basic and acidic residues; that stretch reads MSRDMMNRESPDKGLD. Residues 22 to 85 constitute a DNA-binding region (homeobox); that stretch reads DSGKYVRYTP…NRRCREKQRK (64 aa). Residues 80–122 adopt a coiled-coil conformation; sequence REKQRKEAARLQTVNRKLNAMNKLLMEENDRLQKQVSNLVYEN. Residues 80–130 form a ZIP domain region; it reads REKQRKEAARLQTVNRKLNAMNKLLMEENDRLQKQVSNLVYENGHMKHQLH. Positions 130-148 are enriched in polar residues; the sequence is HTASGTTTDNSCESVVVSG. The segment at 130–166 is disordered; the sequence is HTASGTTTDNSCESVVVSGQQHQQQNPNPQHQQRDAN. The segment covering 149–160 has biased composition (low complexity); that stretch reads QQHQQQNPNPQH. The 229-residue stretch at 164–392 folds into the START domain; it reads DANNPAGLLS…IAQETSGEVQ (229 aa).

Belongs to the HD-ZIP homeobox family. Class III subfamily. As to quaternary structure, homodimer. Heterodimer with ZPR3. Interacts with ESR1 and ESR2. Interacts with ZPR3. As to expression, expressed in the center of the meristem and on the adaxial side of the leaves.

Its subcellular location is the nucleus. With respect to regulation, inhibited by ZPR3. In terms of biological role, probable transcription factor involved in the determination of adaxial-abaxial polarity in ovule primordium. Specifies adaxial leaf fates. In Arabidopsis thaliana (Mouse-ear cress), this protein is Homeobox-leucine zipper protein ATHB-14 (ATHB-14).